Here is a 24-residue protein sequence, read N- to C-terminus: Brevinin-1Sa (24 aa).

A disulfide bridge links cysteine 18 with cysteine 24.

As to expression, expressed by the skin glands.

Its subcellular location is the secreted. Its function is as follows. Antibacterial activity against Gram-negative bacterium E.coli. The chain is Brevinin-1Sa from Lithobates sphenocephalus (Southern leopard frog).